We begin with the raw amino-acid sequence, 542 residues long: Glucose-6-phosphate isomerase (542 aa).

E354 (proton donor) is an active-site residue. Residues H385 and K505 contribute to the active site.

Belongs to the GPI family.

The protein localises to the cytoplasm. It carries out the reaction alpha-D-glucose 6-phosphate = beta-D-fructose 6-phosphate. It functions in the pathway carbohydrate biosynthesis; gluconeogenesis. Its pathway is carbohydrate degradation; glycolysis; D-glyceraldehyde 3-phosphate and glycerone phosphate from D-glucose: step 2/4. Catalyzes the reversible isomerization of glucose-6-phosphate to fructose-6-phosphate. The sequence is that of Glucose-6-phosphate isomerase from Nitrosospira multiformis (strain ATCC 25196 / NCIMB 11849 / C 71).